Here is a 321-residue protein sequence, read N- to C-terminus: Glycerol-3-phosphate dehydrogenase [NAD(P)+] (321 aa).

4 residues coordinate NADPH: serine 14, phenylalanine 15, arginine 35, and lysine 109. The sn-glycerol 3-phosphate site is built by lysine 109 and glycine 137. Alanine 141 is a binding site for NADPH. 5 residues coordinate sn-glycerol 3-phosphate: lysine 192, aspartate 252, serine 262, arginine 263, and asparagine 264. The active-site Proton acceptor is lysine 192. Arginine 263 lines the NADPH pocket. NADPH-binding residues include leucine 287 and glutamate 289.

The protein belongs to the NAD-dependent glycerol-3-phosphate dehydrogenase family.

Its subcellular location is the cytoplasm. It carries out the reaction sn-glycerol 3-phosphate + NAD(+) = dihydroxyacetone phosphate + NADH + H(+). The catalysed reaction is sn-glycerol 3-phosphate + NADP(+) = dihydroxyacetone phosphate + NADPH + H(+). The protein operates within membrane lipid metabolism; glycerophospholipid metabolism. Functionally, catalyzes the reduction of the glycolytic intermediate dihydroxyacetone phosphate (DHAP) to sn-glycerol 3-phosphate (G3P), the key precursor for phospholipid synthesis. The protein is Glycerol-3-phosphate dehydrogenase [NAD(P)+] of Rickettsia felis (strain ATCC VR-1525 / URRWXCal2) (Rickettsia azadi).